The following is a 127-amino-acid chain: uncharacterized protein (127 aa).

This is an uncharacterized protein from Methanocaldococcus jannaschii (strain ATCC 43067 / DSM 2661 / JAL-1 / JCM 10045 / NBRC 100440) (Methanococcus jannaschii).